The sequence spans 218 residues: Putative tRNA methyltransferase MG248 (218 aa).

It belongs to the TrmK family.

It localises to the cytoplasm. This Mycoplasma genitalium (strain ATCC 33530 / DSM 19775 / NCTC 10195 / G37) (Mycoplasmoides genitalium) protein is Putative tRNA methyltransferase MG248.